Consider the following 146-residue polypeptide: VHLTGEEKSAVTGLWGKVNVEDVGGEALGRLLVVYPWTQRFFESFGDLSSPSAVMGNPKVKAHGKKVLSAFSDGLNHLDNLKGTFAKLSELHCDKLHVDPENFRLLGNVLVVVLAHHFGKDFTPQVQSAYQKVVAGVANALAHKYH.

N-acetylvaline is present on Val1. A Globin domain is found at His2 to His146. Thr12 is subject to Phosphothreonine. Ser44 is modified (phosphoserine). Position 59 is an N6-acetyllysine (Lys59). His63 provides a ligand contact to heme b. An N6-acetyllysine modification is found at Lys82. His92 is a heme b binding site. Cys93 is subject to S-nitrosocysteine. N6-acetyllysine is present on Lys144.

Belongs to the globin family. Heterotetramer of two alpha chains and two beta chains. Red blood cells.

Its function is as follows. Involved in oxygen transport from the lung to the various peripheral tissues. This chain is Hemoglobin subunit beta (HBB), found in Loris tardigradus (Slender loris).